A 2605-amino-acid polypeptide reads, in one-letter code: Protein ABERRANT POLLEN TRANSMISSION 1 (2605 aa).

Positions 1–43 are cleaved as a signal peptide; the sequence is MMLGLVQLLVGFVVAWEAVELVLRHGLLLSVFKLAILAALAAA. The disordered stretch occupies residues 137-158; sequence STNKKKPAPRKPISTTTAKAKG. 11 N-linked (GlcNAc...) asparagine glycosylation sites follow: Asn232, Asn320, Asn348, Asn516, Asn587, Asn628, Asn696, Asn779, Asn1171, Asn1318, and Asn1459. Residues 305-326 form a disordered region; that stretch reads SASTVAEQKDEPSVDNKSAARS. Over residues 311–326 the composition is skewed to basic and acidic residues; that stretch reads EQKDEPSVDNKSAARS. The tract at residues 1761-1818 is disordered; the sequence is MSKDGALSSVSSTSQPSEPQQIKSSESPPSNGSGKPDLTSSSENALKRSNNSDSEEEG. Residues 1768–1781 show a composition bias toward low complexity; it reads SSVSSTSQPSEPQQ. Polar residues predominate over residues 1782 to 1812; it reads IKSSESPPSNGSGKPDLTSSSENALKRSNNS. Residues Asn1791, Asn1810, Asn2003, Asn2280, and Asn2291 are each glycosylated (N-linked (GlcNAc...) asparagine). Disordered regions lie at residues 2269–2312 and 2332–2361; these read VSTT…SSFD and EGQT…REDK. Residues 2281–2300 show a composition bias toward polar residues; it reads TSVAETNSPNNQSSKETTFA. Composition is skewed to basic and acidic residues over residues 2303 to 2312 and 2343 to 2361; these read PELRRTSSFD and DAAK…REDK. N-linked (GlcNAc...) asparagine glycans are attached at residues Asn2468 and Asn2564. Residues 2574 to 2605 form a disordered region; it reads TELEVAELPPRAPGYNTDSSSDSSSAETSPKD.

It belongs to the SABRE family. Mature pollen-specific.

It is found in the secreted. The protein localises to the golgi apparatus. In terms of biological role, may be involved in membrane trafficking. Required for tip growth in pollen tubes and root hairs. In Zea mays (Maize), this protein is Protein ABERRANT POLLEN TRANSMISSION 1.